The following is a 181-amino-acid chain: NADH-quinone oxidoreductase subunit I (181 aa).

4Fe-4S ferredoxin-type domains are found at residues 44–74 and 90–119; these read LNRY…VEGA and RVYQ…MTND. Residues C54, C57, C60, C64, C99, C102, C105, and C109 each contribute to the [4Fe-4S] cluster site.

It belongs to the complex I 23 kDa subunit family. In terms of assembly, NDH-1 is composed of 14 different subunits. Subunits NuoA, H, J, K, L, M, N constitute the membrane sector of the complex. The cofactor is [4Fe-4S] cluster.

The protein localises to the cell membrane. The enzyme catalyses a quinone + NADH + 5 H(+)(in) = a quinol + NAD(+) + 4 H(+)(out). Functionally, NDH-1 shuttles electrons from NADH, via FMN and iron-sulfur (Fe-S) centers, to quinones in the respiratory chain. The immediate electron acceptor for the enzyme in this species is believed to be menaquinone. Couples the redox reaction to proton translocation (for every two electrons transferred, four hydrogen ions are translocated across the cytoplasmic membrane), and thus conserves the redox energy in a proton gradient. The polypeptide is NADH-quinone oxidoreductase subunit I (Mycobacterium marinum (strain ATCC BAA-535 / M)).